The following is a 193-amino-acid chain: Acyl carrier protein phosphodiesterase (193 aa).

The protein belongs to the AcpH family.

It carries out the reaction holo-[ACP] + H2O = apo-[ACP] + (R)-4'-phosphopantetheine + H(+). Its function is as follows. Converts holo-ACP to apo-ACP by hydrolytic cleavage of the phosphopantetheine prosthetic group from ACP. This chain is Acyl carrier protein phosphodiesterase, found in Salmonella paratyphi A (strain ATCC 9150 / SARB42).